Consider the following 449-residue polypeptide: Tubulin beta-2 chain (449 aa).

The GTP site is built by Gln-11 and Glu-69. Glu-69 contacts Mg(2+). His-137 carries the methylhistidine modification. 6 residues coordinate GTP: Ser-138, Gly-142, Thr-143, Gly-144, Asn-204, and Asn-226.

It belongs to the tubulin family. In terms of assembly, dimer of alpha and beta chains. A typical microtubule is a hollow water-filled tube with an outer diameter of 25 nm and an inner diameter of 15 nM. Alpha-beta heterodimers associate head-to-tail to form protofilaments running lengthwise along the microtubule wall with the beta-tubulin subunit facing the microtubule plus end conferring a structural polarity. Microtubules usually have 13 protofilaments but different protofilament numbers can be found in some organisms and specialized cells. Requires Mg(2+) as cofactor.

It is found in the cytoplasm. The protein localises to the cytoskeleton. Its function is as follows. Tubulin is the major constituent of microtubules, a cylinder consisting of laterally associated linear protofilaments composed of alpha- and beta-tubulin heterodimers. Microtubules grow by the addition of GTP-tubulin dimers to the microtubule end, where a stabilizing cap forms. Below the cap, tubulin dimers are in GDP-bound state, owing to GTPase activity of alpha-tubulin. The sequence is that of Tubulin beta-2 chain (tubC) from Emericella nidulans (strain FGSC A4 / ATCC 38163 / CBS 112.46 / NRRL 194 / M139) (Aspergillus nidulans).